A 1502-amino-acid chain; its full sequence is MIRQCLHLTTSPLLLLLLIALSSIGTVVAKSDGPKIASIQLETEPSMPFYFENSDTVLFLRLDTGEVYQSFDGGVEWKVLGKDHETEGETAGLANGAVMIQAHPYDNQKAYILGRHGVHWVTTDQGKTWREFEVPAAPSMFNEPLRFHGEDSGKVIFQGERCSAFACVETSYYTRNNFETVKPMRDTARGCMWAVATPGFADSTTEHAEEIRDRVLCIVHGLKNPFASAYRLVYSDSFFEDDQDGIEAKLNEGRPVAGIINAAARTKYIVAAAKSQGTDELAMFVTDDAITWHRAEFGNHKIEESAYTVLEGTNYSIEVDVMNTDRSTNMGVLFTSNSNGTYFTRNIEHTNRDMSGLVDFEKIAGVQGIVLVNVVDNWEEIENDPKADRKVISKISFDDGRTFQSLKVKDKDLHLHSVTAFENIGRVFSSPAPGIVMGVGNTGTHLKSYTKDGDLYVSDDAGVTWRLALEKPHKYEIGNKGAIIMAIKDNDKPTKKIQYSINHGKDWETAELDREIIPYFLTTTPDSTSLKFMLVGYVEDPADWYIYAIDFEGLHERECKDSDFENWPARLDENGEPDCLMGHKQFYRRRKSDANCFITETMFKTPKPEFKSCKCTAEDFECDYNFVRSEDRKECVPATILKAPEGTCKNDDDTFKGPSGWRLIPGNVCTRDGAVELDKEIDRPCKDALKTPSGDSKAVSSTANYIETEMFGEFFYLERAGSSRGEDETIIMRTTDGKLYVTHDHGKSWTHELKDVKIQQIAPHRYLNDRAFFLTSGKKQYYTINRAESFDAFSAPAEVNPSGLTLGYHEEFKDWMIWTGPGECSHGECPKVSFISKHRGDDWEILLRAVEKCEFMAREDRKDSGSLIFCDQHEGEKVDGQRMLVTSNDFFATSTTPLTNIIDFATMAEFIIIATRNPEKENSLKVDASVNGVEFADAEFPYNLEVPVQLAYTVLDSSTHSVFLHVTANNKMDQSYGSIIKSNSNGTSYVLSLNDVNRNNGGYVDFEKLPGLEGVALANVVSNTKNVEKGSEKKLTSMITHNDGSQWTLIPPPAKDSEGKPYSCGSDGKPTDKCSLHLHGYTERRDPRDSFGSASAIGLLFGVGNVGESLGSKSEASTFFSSDGGISWKEVKKGNYMWKFGDQGSVLVLVEELKPTRDIYFSTDEGDTWEKYQFSEKEVTVQSLSTVPSGTSKNFLIWGKETGSSKLVTINLDFSGLRDRTCNLDEDTGESEDYYLWEPKHPLQEGNCLFGHVEQYHRKKPSSHCWNDWSEAHVHRISHNCTCTEEDYECDYNYERQTDGSCALVPGLLKPNAIDYCRENPEAIEYWEPTGYRRIPLTTCQGGKNLDRWVSRPCPSHEEEYQRKHGPSGAVIFFAIIVPITIAVAAGYWVYTRWDGKFGQIRLGDGGAQSFVTSRGDSPFITIPVAIIAGTVAAVKVLPLLVMSLWRSVTGYVRIPGRRGPRPYATRDAFAARRGDYTHVVDDEDELLGDDEFEDEEGDERN.

An N-terminal signal peptide occupies residues 1-29 (MIRQCLHLTTSPLLLLLLIALSSIGTVVA). Residues 30 to 1369 (KSDGPKIASI…EYQRKHGPSG (1340 aa)) are Lumenal-facing. 2 BNR repeats span residues 68–78 (YQSFDGGVEWK) and 120–130 (WVTTDQGKTWR). N-linked (GlcNAc...) asparagine glycosylation is found at Asn-314 and Asn-339. BNR repeat units follow at residues 395–404 (ISFDDGRTFQ), 456–466 (YVSDDAGVTWR), 498–508 (QYSINHGKDWE), and 740–750 (YVTHDHGKSWT). N-linked (GlcNAc...) asparagine glycosylation is present at Asn-985. 2 BNR repeats span residues 1119-1129 (FFSSDGGISWK) and 1160-1171 (YFSTDEGDTWEK). N-linked (GlcNAc...) asparagine glycosylation is present at Asn-1280. A helical membrane pass occupies residues 1370-1390 (AVIFFAIIVPITIAVAAGYWV). At 1391–1422 (YTRWDGKFGQIRLGDGGAQSFVTSRGDSPFIT) the chain is on the cytoplasmic side. Residues 1423–1443 (IPVAIIAGTVAAVKVLPLLVM) form a helical membrane-spanning segment. Residues 1444 to 1502 (SLWRSVTGYVRIPGRRGPRPYATRDAFAARRGDYTHVVDDEDELLGDDEFEDEEGDERN) lie on the Lumenal side of the membrane.

It belongs to the VPS10-related sortilin family.

The protein localises to the golgi apparatus. Its subcellular location is the trans-Golgi network membrane. The protein resides in the prevacuolar compartment membrane. Its function is as follows. Functions as a sorting receptor in the Golgi compartment required for the intracellular sorting and delivery of soluble vacuolar proteins, like carboxypeptidase Y (CPY) and proteinase A. Executes multiple rounds of sorting by cycling between the late Golgi and a prevacuolar endosome-like compartment. The chain is Vacuolar protein sorting/targeting protein 10 (vps10) from Talaromyces stipitatus (strain ATCC 10500 / CBS 375.48 / QM 6759 / NRRL 1006) (Penicillium stipitatum).